The chain runs to 178 residues: CASP-like protein 2A2 (178 aa).

The Cytoplasmic portion of the chain corresponds to 1 to 22 (MDKTDQTAIDESALVLNRTEKS). Residues 23–43 (AEAVLRVASMALSITGLVIMI) form a helical membrane-spanning segment. Residues 44-69 (KNSISNEFGSVSYSNIGAFMYLVSAN) lie on the Extracellular side of the membrane. Residues 70 to 90 (GVCAAYSLLSALAILALPCPI) traverse the membrane as a helical segment. At 91 to 96 (SKVQVR) the chain is on the cytoplasmic side. Residues 97-117 (TLFLLDQVVTYVVLAAGAVSA) traverse the membrane as a helical segment. The Extracellular portion of the chain corresponds to 118-145 (ETVYLAYYGNIPITWSSACDSYGSFCHN). A helical transmembrane segment spans residues 146–166 (ALISVVFTFVVSLLYMLLSLI). Over 167-178 (SSYRLFTRFEAP) the chain is Cytoplasmic.

Belongs to the Casparian strip membrane proteins (CASP) family. As to quaternary structure, homodimer and heterodimers. As to expression, mostly expressed in flowers and buds and, to a lower extent, in roots and yellow siliques. Localized in the floral organ abscission zone.

The protein localises to the cell membrane. Functionally, involved in floral organ shedding. The chain is CASP-like protein 2A2 from Arabidopsis thaliana (Mouse-ear cress).